A 379-amino-acid polypeptide reads, in one-letter code: Putative glutamate--cysteine ligase 2 (379 aa).

Belongs to the glutamate--cysteine ligase type 2 family. YbdK subfamily.

The catalysed reaction is L-cysteine + L-glutamate + ATP = gamma-L-glutamyl-L-cysteine + ADP + phosphate + H(+). ATP-dependent carboxylate-amine ligase which exhibits weak glutamate--cysteine ligase activity. The sequence is that of Putative glutamate--cysteine ligase 2 from Roseiflexus sp. (strain RS-1).